The chain runs to 249 residues: MEWSDEGIILGVRRHGEAGAIVELLTRGHGRHLGLVRGGASSRLRPLLQPGNSVLAVWRARLDEHLGYYQLEGTRMRAATMLASSHAVYGITHLASLARLLPERDPHEDIYEMLERTLDDFDDVGDAATHLIRFELAMLAELGFGLDLSACAATGATTDLIYVSPKSGGAVSRTAGEPWREKLLRLPDFLREDNDGRNGWSDQDLRDGFDLTGRFLLRNVLEPRGQGHSDARDGFINAVAKHLARAAIV.

It belongs to the RecO family.

Its function is as follows. Involved in DNA repair and RecF pathway recombination. This is DNA repair protein RecO from Rhodopseudomonas palustris (strain HaA2).